A 310-amino-acid chain; its full sequence is Protoheme IX farnesyltransferase 2 (310 aa).

The next 9 membrane-spanning stretches (helical) occupy residues 25-45 (PGIIFGNLISVAGGFLLAAKG), 49-69 (LVLMLASLVGLSLVVASGCAI), 98-118 (HVLLFGIALGVLGFGILALFT), 121-141 (LALLFAAIGYVVYVGIYSLYM), 145-165 (SVYGTLVGSFSGAVPPVVGYC), 176-196 (VILLLMFSLWQMPHSYAIAIF), 222-242 (IVLYIAVFALVSTMLPLAGYT), 245-265 (AFMAVTCATSLWWLTMALKGY), and 277-297 (QVFGFSIITITALSVTMALDF).

It belongs to the UbiA prenyltransferase family. Protoheme IX farnesyltransferase subfamily.

The protein resides in the cell inner membrane. The catalysed reaction is heme b + (2E,6E)-farnesyl diphosphate + H2O = Fe(II)-heme o + diphosphate. It participates in porphyrin-containing compound metabolism; heme O biosynthesis; heme O from protoheme: step 1/1. Its function is as follows. Converts heme B (protoheme IX) to heme O by substitution of the vinyl group on carbon 2 of heme B porphyrin ring with a hydroxyethyl farnesyl side group. The protein is Protoheme IX farnesyltransferase 2 of Shewanella sp. (strain MR-4).